The primary structure comprises 204 residues: Thymidylate kinase (204 aa).

Position 11–18 (11–18 (GLDKSGKT)) interacts with ATP.

It belongs to the thymidylate kinase family.

It carries out the reaction dTMP + ATP = dTDP + ADP. It functions in the pathway pyrimidine metabolism; dTTP biosynthesis. This chain is Thymidylate kinase (TMK), found in Cowpox virus (strain GRI-90 / Grishak) (CPV).